The primary structure comprises 258 residues: Phosphate import ATP-binding protein PstB (258 aa).

In terms of domain architecture, ABC transporter spans 12–253; sequence IQVHNLNFYY…PKMKQTEDYI (242 aa). ATP is bound at residue 44–51; that stretch reads GPSGCGKS.

Belongs to the ABC transporter superfamily. Phosphate importer (TC 3.A.1.7) family. The complex is composed of two ATP-binding proteins (PstB), two transmembrane proteins (PstC and PstA) and a solute-binding protein (PstS).

The protein localises to the cell inner membrane. It carries out the reaction phosphate(out) + ATP + H2O = ADP + 2 phosphate(in) + H(+). Functionally, part of the ABC transporter complex PstSACB involved in phosphate import. Responsible for energy coupling to the transport system. The chain is Phosphate import ATP-binding protein PstB from Photorhabdus laumondii subsp. laumondii (strain DSM 15139 / CIP 105565 / TT01) (Photorhabdus luminescens subsp. laumondii).